Here is a 287-residue protein sequence, read N- to C-terminus: Bifunctional protein FolD (287 aa).

NADP(+) is bound by residues 166–168 (GAS) and Ile232.

It belongs to the tetrahydrofolate dehydrogenase/cyclohydrolase family. As to quaternary structure, homodimer.

The catalysed reaction is (6R)-5,10-methylene-5,6,7,8-tetrahydrofolate + NADP(+) = (6R)-5,10-methenyltetrahydrofolate + NADPH. It catalyses the reaction (6R)-5,10-methenyltetrahydrofolate + H2O = (6R)-10-formyltetrahydrofolate + H(+). The protein operates within one-carbon metabolism; tetrahydrofolate interconversion. In terms of biological role, catalyzes the oxidation of 5,10-methylenetetrahydrofolate to 5,10-methenyltetrahydrofolate and then the hydrolysis of 5,10-methenyltetrahydrofolate to 10-formyltetrahydrofolate. The protein is Bifunctional protein FolD of Buchnera aphidicola subsp. Baizongia pistaciae (strain Bp).